Consider the following 156-residue polypeptide: MPRRRVVAAREILPDPKFSSQTIAKFMNHVMQDGKKSIAESIVYGALERVQEKNKVDPVEFFETTLEKVRPMVEVKARRVGGATYQVPMEVRPSRRTALAMRWLVDAAAKRSEKTMALRLAGELLDAAEGKGAAIKKREDVHRMAEANKAFSHYRF.

The protein belongs to the universal ribosomal protein uS7 family. In terms of assembly, part of the 30S ribosomal subunit. Contacts proteins S9 and S11.

Its function is as follows. One of the primary rRNA binding proteins, it binds directly to 16S rRNA where it nucleates assembly of the head domain of the 30S subunit. Is located at the subunit interface close to the decoding center, probably blocks exit of the E-site tRNA. The polypeptide is Small ribosomal subunit protein uS7 (Acinetobacter baumannii (strain AB307-0294)).